Here is a 510-residue protein sequence, read N- to C-terminus: MSRPRLNIDGDTLKLEEILQVARHTVTVELAPAAAARVKAARDLVDRVAAGDTPSYGINTGFGTLAEVRIDKKDLRELQRNLILSHAAGVGSPLPLPEARVLLLLRCNVLAKGYSGIRPETLALALEMLNRDVVPVVPERGSVGASGDLAPLAHLALVFIGEGEAFYKGERLPAAQALERAGLKPVVLEAKEGLALVNGTQAMCAVGTLLQLRAEMLADLADLAGAMTLEGLLGSHKPFIPEIQDVRAHEGQKACAAHLRELLADSALVESHVNCSKVQDPYSLRCMPQVHGAAREGLSFARRILEVEINSATDNPLVFVETERIVSGGNFHGQPVSLALDVAAMALTQLSAISERRVEQLVNPALSGLPPFLAKNSGLNSGFMIAQVTSAALVAESRVLSHPASVDSIPSSAGREDHVSMGMTAALKGRQVADFTRSCLAIELLVAAQALDYRQPTRAGKGPQAAYELIRSKIPTMEKDRELHRDIAAVSALIDSGELLNAVRTATRGQ.

Positions alanine 145 to glycine 147 form a cross-link, 5-imidazolinone (Ala-Gly). Position 146 is a 2,3-didehydroalanine (Ser) (serine 146).

This sequence belongs to the PAL/histidase family. Post-translationally, contains an active site 4-methylidene-imidazol-5-one (MIO), which is formed autocatalytically by cyclization and dehydration of residues Ala-Ser-Gly.

The protein resides in the cytoplasm. The catalysed reaction is L-histidine = trans-urocanate + NH4(+). It participates in amino-acid degradation; L-histidine degradation into L-glutamate; N-formimidoyl-L-glutamate from L-histidine: step 1/3. This is Histidine ammonia-lyase from Stigmatella aurantiaca.